Consider the following 425-residue polypeptide: Probable mitochondrial import inner membrane translocase subunit tin-44 (425 aa).

A coiled-coil region spans residues 38–149 (FLNNLIDNVR…EHVEKVAEKV (112 aa)).

Belongs to the Tim44 family. In terms of assembly, probable component of the PAM complex at least composed of a mitochondrial HSP70 protein, GrpE, tin-44, tim-16 and tim-14/dnj-21. The complex interacts with the tim-23 component of the TIM23 complex.

The protein resides in the mitochondrion inner membrane. Its function is as follows. Essential component of the PAM complex, a complex required for the translocation of transit peptide-containing proteins from the inner membrane into the mitochondrial matrix in an ATP-dependent manner. Recruits mitochondrial HSP70 to drive protein translocation into the matrix using ATP as an energy source. The polypeptide is Probable mitochondrial import inner membrane translocase subunit tin-44 (Caenorhabditis elegans).